A 741-amino-acid chain; its full sequence is Zinc metalloproteinase nas-30 (741 aa).

Low complexity-rich tracts occupy residues 71 to 85 (KPAP…APAP) and 97 to 118 (PAPK…DAPP). Residues 71–122 (KPAPAAAGPRSAPAPTNEDYNTDIDVPAPKAKARAAPTPRRAQADAPPVYRQ) form a disordered region. In terms of domain architecture, Peptidase M12A spans 324–516 (KVITGSVYRW…VKQVNRLYCN (193 aa)). Cystine bridges form between C364–C515, C385–C404, C519–C539, C541–C550, C562–C583, and C610–C630. H412 contributes to the Zn(2+) binding site. The active site involves E413. Residues H416 and H422 each coordinate Zn(2+). The EGF-like domain occupies 539–550 (CKCPDGLGGKLC). A CUB domain is found at 550 to 648 (CGRAAKGTDH…ISDQSEALIL (99 aa)). N633 is a glycosylation site (N-linked (GlcNAc...) asparagine).

Zn(2+) serves as cofactor.

In terms of biological role, metalloprotease. This Caenorhabditis elegans protein is Zinc metalloproteinase nas-30.